Consider the following 529-residue polypeptide: Bifunctional purine biosynthesis protein PurH (529 aa).

The MGS-like domain occupies 1–148; that stretch reads MQQRRPVRRA…KNHKDVAIVV (148 aa). Lysine 287 carries the post-translational modification N6-acetyllysine.

Belongs to the PurH family.

The catalysed reaction is (6R)-10-formyltetrahydrofolate + 5-amino-1-(5-phospho-beta-D-ribosyl)imidazole-4-carboxamide = 5-formamido-1-(5-phospho-D-ribosyl)imidazole-4-carboxamide + (6S)-5,6,7,8-tetrahydrofolate. It catalyses the reaction IMP + H2O = 5-formamido-1-(5-phospho-D-ribosyl)imidazole-4-carboxamide. The protein operates within purine metabolism; IMP biosynthesis via de novo pathway; 5-formamido-1-(5-phospho-D-ribosyl)imidazole-4-carboxamide from 5-amino-1-(5-phospho-D-ribosyl)imidazole-4-carboxamide (10-formyl THF route): step 1/1. It functions in the pathway purine metabolism; IMP biosynthesis via de novo pathway; IMP from 5-formamido-1-(5-phospho-D-ribosyl)imidazole-4-carboxamide: step 1/1. The polypeptide is Bifunctional purine biosynthesis protein PurH (Escherichia coli O17:K52:H18 (strain UMN026 / ExPEC)).